Consider the following 529-residue polypeptide: CRISPR-associated endodeoxyribonuclease Cas12f1 (529 aa).

Residues 1–95 form a zinc finger domain (ZF) region; that stretch reads MAKNTITKTL…RGQFPDAVFW (95 aa). Zn(2+) contacts are provided by Cys50, His53, Cys69, and Cys72. The segment at 96 to 192 is recognition domain (REC); that stretch reads QEISEIFRQL…PTTKSDNFPI (97 aa). The wedge domain (WED) stretch occupies residues 193-312; it reads PLVKQKGGQY…MLNLSIDVPK (120 aa). The segment at 313 to 321 is linker; sequence IDKGVDPSI. The ruvC-I stretch occupies residues 322–473; it reads IGGIDVGVKS…RKVAPNNTSK (152 aa). Residues Asp326 and Glu422 contribute to the active site. The segment at 474 to 508 is target nucleic acid-binding (TNB); sequence TCSKCGHLNNYFNFEYRKKNKFPHFKCEKCNFKEN. Residues Cys475 and Cys478 each coordinate Zn(2+). Arg490 is a catalytic residue. Cys500 and Cys503 together coordinate Zn(2+). The ruvC-II stretch occupies residues 509 to 529; sequence ADYNAALNISNPKLKSTKEEP. Asp510 is a catalytic residue.

The protein belongs to the CRISPR-associated endonuclease Cas12f family. As to quaternary structure, an asymmetric homodimer. Guide RNA is probably required for dimerization. Mg(2+) serves as cofactor. It depends on Zn(2+) as a cofactor.

With respect to regulation, target ssDNA cleavage is inhibited by EDTA. Activity is maximal with 5-50 mM NaCl, is less efficient at higher NaCl concentrations. Its function is as follows. CRISPR (clustered regularly interspaced short palindromic repeat), is an adaptive immune system that provides protection against mobile genetic elements (viruses, transposable elements and conjugative plasmids). CRISPR clusters contain sequences complementary to antecedent mobile elements and target invading nucleic acids. CRISPR clusters are transcribed and processed into CRISPR RNA (crRNA), which requires a trans-encoded small RNA (tracrRNA), but not this protein (in vitro). Upon expression in E.coli of this protein, a mini CRISPR array and the probable tracrRNA, the protein associates with both RNAs. The mini system is not active in E.coli against phiX174 phage, nor is it active in protection against transformation by foreign plasmids. In vitro the purified protein-tracrRNA-crRNA complex cleaves ssDNA complementary to the crRNA; target cleavage requires both tracrRNA and crRNA, but not a protospacer adjacent motif (PAM). The tracrRNA-crRNA can be replaced by a single guide RNA (sgRNA). 2-nucleotide mismatches in the middle of the crRNA:DNA heteroduplex decrease cleavage. Cleavage occurs just downstream of the heteroduplex. Activation of this protein results in non-specific ssDNA degradation in vitro. In vitro and in E.coli (coexpressed with sgRNA) has dsDNA endonuclease activity, recognizing the 5' PAM sequence TTTR; both sgRNA and a PAM are required for activity. Cleaves the target strand 24 and the nontarget strand 22 bases upstream of the PAM (respectively), resulting in 5' overhangs. The 2 monomers interact differently with the sgRNA and target DNA. Mutagenesis of a dimeric construct shows that one of the RuvC monomers probably cleaves both DNA strands. The polypeptide is CRISPR-associated endodeoxyribonuclease Cas12f1 (Uncultured archaeon).